The chain runs to 149 residues: D-aminoacyl-tRNA deacylase (149 aa).

The short motif at 139–140 (GP) is the Gly-cisPro motif, important for rejection of L-amino acids element.

The protein belongs to the DTD family. As to quaternary structure, homodimer.

Its subcellular location is the cytoplasm. It catalyses the reaction glycyl-tRNA(Ala) + H2O = tRNA(Ala) + glycine + H(+). The enzyme catalyses a D-aminoacyl-tRNA + H2O = a tRNA + a D-alpha-amino acid + H(+). Functionally, an aminoacyl-tRNA editing enzyme that deacylates mischarged D-aminoacyl-tRNAs. Also deacylates mischarged glycyl-tRNA(Ala), protecting cells against glycine mischarging by AlaRS. Acts via tRNA-based rather than protein-based catalysis; rejects L-amino acids rather than detecting D-amino acids in the active site. By recycling D-aminoacyl-tRNA to D-amino acids and free tRNA molecules, this enzyme counteracts the toxicity associated with the formation of D-aminoacyl-tRNA entities in vivo and helps enforce protein L-homochirality. This is D-aminoacyl-tRNA deacylase (dtd1) from Schizosaccharomyces pombe (strain 972 / ATCC 24843) (Fission yeast).